Consider the following 434-residue polypeptide: Glutamate-1-semialdehyde 2,1-aminomutase (434 aa).

Lys-273 is modified (N6-(pyridoxal phosphate)lysine).

Belongs to the class-III pyridoxal-phosphate-dependent aminotransferase family. HemL subfamily. In terms of assembly, homodimer. Pyridoxal 5'-phosphate serves as cofactor.

It is found in the cytoplasm. It carries out the reaction (S)-4-amino-5-oxopentanoate = 5-aminolevulinate. It participates in porphyrin-containing compound metabolism; protoporphyrin-IX biosynthesis; 5-aminolevulinate from L-glutamyl-tRNA(Glu): step 2/2. This Polynucleobacter asymbioticus (strain DSM 18221 / CIP 109841 / QLW-P1DMWA-1) (Polynucleobacter necessarius subsp. asymbioticus) protein is Glutamate-1-semialdehyde 2,1-aminomutase.